Reading from the N-terminus, the 198-residue chain is Recombination protein RecR (198 aa).

The C4-type zinc finger occupies 56–71; sequence CDTCGNVDTQNPCGIC. In terms of domain architecture, Toprim spans 79–174; that stretch reads KSICVVEDVA…RITQLAHGLP (96 aa).

Belongs to the RecR family.

May play a role in DNA repair. It seems to be involved in an RecBC-independent recombinational process of DNA repair. It may act with RecF and RecO. The protein is Recombination protein RecR of Erythrobacter litoralis (strain HTCC2594).